The following is a 428-amino-acid chain: Beta-1,3-galactosyl-O-glycosyl-glycoprotein beta-1,6-N-acetylglucosaminyltransferase (428 aa).

The Cytoplasmic portion of the chain corresponds to 1-9 (MLRTLLRRR). Residues 5–9 (LLRRR) form a mediates interaction with GOLPH3 and is necessary and sufficient for localization to the Golgi region. Residues 10–32 (LFSYPTKYYFMVLVLSLITFSVL) traverse the membrane as a helical; Signal-anchor for type II membrane protein segment. The interval 33–121 (RIHQKPEFVS…EPLSKEEAEF (89 aa)) is stem region. At 33-428 (RIHQKPEFVS…RHKALETLKH (396 aa)) the chain is on the lumenal side. Asn58 and Asn95 each carry an N-linked (GlcNAc...) asparagine glycan. 4 cysteine pairs are disulfide-bonded: Cys59/Cys413, Cys100/Cys172, Cys151/Cys199, and Cys372/Cys381. The segment at 122–428 (PIAYSIVVHH…RHKALETLKH (307 aa)) is catalytic. UDP-N-acetyl-alpha-D-glucosamine contacts are provided by residues 128–130 (VVH), 155–157 (DTK), and Tyr187. Glu243, Lys251, Arg254, Glu320, Lys341, and Tyr358 together coordinate a glycoprotein. The active-site Nucleophile is Glu320. Residues Arg378 and Lys401 each coordinate UDP-N-acetyl-alpha-D-glucosamine.

Belongs to the glycosyltransferase 14 family. As to quaternary structure, interacts with GOLPH3; may control GCNT1 retention in the Golgi. As to expression, highly expressed in activated T-lymphocytes and myeloid cells.

Its subcellular location is the golgi apparatus membrane. It carries out the reaction a 3-O-[beta-D-galactosyl-(1-&gt;3)-N-acetyl-alpha-D-galactosaminyl]-L-seryl-[protein] + UDP-N-acetyl-alpha-D-glucosamine = 3-O-{beta-D-galactosyl-(1-&gt;3)-[N-acetyl-beta-D-glucosaminyl-(1-&gt;6)]-N-acetyl-alpha-D-galactosaminyl}-L-seryl-[protein] + UDP + H(+). It catalyses the reaction a 3-O-[beta-D-galactosyl-(1-&gt;3)-N-acetyl-alpha-D-galactosaminyl]-L-threonyl-[protein] + UDP-N-acetyl-alpha-D-glucosamine = a 3-O-{beta-D-galactosyl-(1-&gt;3)-[N-acetyl-beta-D-glucosaminyl-(1-&gt;6)]-N-acetyl-alpha-D-galactosaminyl}-L-threonyl-[protein] + UDP + H(+). The enzyme catalyses a globoside GalGb4Cer + UDP-N-acetyl-alpha-D-glucosamine = a globoside GlcNAc-(beta1-&gt;6)-GalGb4Cer + UDP + H(+). The catalysed reaction is a ganglioside GA1 + UDP-N-acetyl-alpha-D-glucosamine = a ganglioside beta-D-GlcNAc-(1-&gt;6)-GA1 + UDP + H(+). Its pathway is protein modification; protein glycosylation. It participates in glycolipid biosynthesis. Its function is as follows. Glycosyltransferase that catalyzes the transfer of an N-acetylglucosamine (GlcNAc) moiety in beta1-6 linkage from UDP-GlcNAc onto mucin-type core 1 O-glycan to form the branched mucin-type core 2 O-glycan. The catalysis is metal ion-independent and occurs with inversion of the anomeric configuration of sugar donor. Selectively involved in synthesis of mucin-type core 2 O-glycans that serve as scaffolds for the display of selectin ligand sialyl Lewis X epitope by myeloid cells, with an impact on homeostasis and recruitment to inflammatory sites. Can also act on glycolipid substrates. Transfers GlcNAc moiety to GalGb4Cer globosides in a reaction step to the synthesis of stage-specific embryonic antigen 1 (SSEA-1) determinant. Can use Galbeta1-3GalNAcalpha1- and Galbeta1-3GalNAcbeta1- oligosaccharide derivatives as acceptor substrates. The polypeptide is Beta-1,3-galactosyl-O-glycosyl-glycoprotein beta-1,6-N-acetylglucosaminyltransferase (GCNT1) (Homo sapiens (Human)).